A 158-amino-acid polypeptide reads, in one-letter code: Cyclic pyranopterin monophosphate synthase (158 aa).

Substrate-binding positions include 74-76 and 112-113; these read MCH and ME. Residue Asp127 is part of the active site.

This sequence belongs to the MoaC family. Homohexamer; trimer of dimers.

The enzyme catalyses (8S)-3',8-cyclo-7,8-dihydroguanosine 5'-triphosphate = cyclic pyranopterin phosphate + diphosphate. The protein operates within cofactor biosynthesis; molybdopterin biosynthesis. Catalyzes the conversion of (8S)-3',8-cyclo-7,8-dihydroguanosine 5'-triphosphate to cyclic pyranopterin monophosphate (cPMP). The chain is Cyclic pyranopterin monophosphate synthase from Thermoanaerobacter sp. (strain X514).